A 118-amino-acid polypeptide reads, in one-letter code: NADH-quinone oxidoreductase subunit A (118 aa).

A run of 3 helical transmembrane segments spans residues 8 to 28 (IGIFLVAAISFPLIPLVLAFF), 64 to 84 (ALAFVIFDIEVIFLYPWAVAF), and 87 to 107 (VGLYGLIAATIFLLMLFAGLL).

The protein belongs to the complex I subunit 3 family. NDH-1 is composed of 14 different subunits. Subunits NuoA, H, J, K, L, M, N constitute the membrane sector of the complex.

The protein localises to the cell membrane. The catalysed reaction is a quinone + NADH + 5 H(+)(in) = a quinol + NAD(+) + 4 H(+)(out). Functionally, NDH-1 shuttles electrons from NADH, via FMN and iron-sulfur (Fe-S) centers, to quinones in the respiratory chain. The immediate electron acceptor for the enzyme in this species is believed to be ubiquinone. Couples the redox reaction to proton translocation (for every two electrons transferred, four hydrogen ions are translocated across the cytoplasmic membrane), and thus conserves the redox energy in a proton gradient. The chain is NADH-quinone oxidoreductase subunit A from Chloroflexus aurantiacus (strain ATCC 29366 / DSM 635 / J-10-fl).